A 645-amino-acid polypeptide reads, in one-letter code: Chaperone protein DnaK (645 aa).

A Phosphothreonine; by autocatalysis modification is found at Thr-201. Residues 606 to 629 are compositionally biased toward low complexity; the sequence is NTNNATAGDNNTTDTGSSSNSDGS. Residues 606–645 are disordered; that stretch reads NTNNATAGDNNTTDTGSSSNSDGSKVVDSDYQEIDKKDGK. The span at 630–645 shows a compositional bias: basic and acidic residues; sequence KVVDSDYQEIDKKDGK.

The protein belongs to the heat shock protein 70 family.

Functionally, acts as a chaperone. This Ehrlichia ruminantium (strain Welgevonden) protein is Chaperone protein DnaK.